The primary structure comprises 276 residues: Diaminopimelate epimerase (276 aa).

Asparagine 13, glutamine 46, and asparagine 66 together coordinate substrate. Cysteine 75 functions as the Proton donor in the catalytic mechanism. Substrate is bound by residues 76–77 (GN), asparagine 159, asparagine 192, and 210–211 (ER). Cysteine 219 serves as the catalytic Proton acceptor. 220 to 221 (GT) provides a ligand contact to substrate.

Belongs to the diaminopimelate epimerase family. Homodimer.

It localises to the cytoplasm. It carries out the reaction (2S,6S)-2,6-diaminopimelate = meso-2,6-diaminopimelate. The protein operates within amino-acid biosynthesis; L-lysine biosynthesis via DAP pathway; DL-2,6-diaminopimelate from LL-2,6-diaminopimelate: step 1/1. Functionally, catalyzes the stereoinversion of LL-2,6-diaminopimelate (L,L-DAP) to meso-diaminopimelate (meso-DAP), a precursor of L-lysine and an essential component of the bacterial peptidoglycan. The protein is Diaminopimelate epimerase of Hahella chejuensis (strain KCTC 2396).